A 181-amino-acid polypeptide reads, in one-letter code: MLSVGFNIAINATTQGVPKIIESLFPNLPNFIAHLLATIVLVIVLAKLVYKPYKQMIEKQRQKITEVLSDAIEKQTQANIKIKQANSLLEEAKTESVSIINTARVDAEIQKNKIIDNANLQAKNIQSYAQNSIKQEKIKAQLEIKNTIVNLAINSAEKILSKEIDKNTNKKLIEEFIKDLD.

Residues 24–44 (LFPNLPNFIAHLLATIVLVIV) form a helical membrane-spanning segment.

The protein belongs to the ATPase B chain family. As to quaternary structure, F-type ATPases have 2 components, F(1) - the catalytic core - and F(0) - the membrane proton channel. F(1) has five subunits: alpha(3), beta(3), gamma(1), delta(1), epsilon(1). F(0) has three main subunits: a(1), b(2) and c(10-14). The alpha and beta chains form an alternating ring which encloses part of the gamma chain. F(1) is attached to F(0) by a central stalk formed by the gamma and epsilon chains, while a peripheral stalk is formed by the delta and b chains.

Its subcellular location is the cell membrane. In terms of biological role, f(1)F(0) ATP synthase produces ATP from ADP in the presence of a proton or sodium gradient. F-type ATPases consist of two structural domains, F(1) containing the extramembraneous catalytic core and F(0) containing the membrane proton channel, linked together by a central stalk and a peripheral stalk. During catalysis, ATP synthesis in the catalytic domain of F(1) is coupled via a rotary mechanism of the central stalk subunits to proton translocation. Component of the F(0) channel, it forms part of the peripheral stalk, linking F(1) to F(0). The polypeptide is ATP synthase subunit b (Mycoplasma capricolum subsp. capricolum (strain California kid / ATCC 27343 / NCTC 10154)).